Consider the following 328-residue polypeptide: Phosphate acyltransferase (328 aa).

It belongs to the PlsX family. Homodimer. Probably interacts with PlsY.

Its subcellular location is the cytoplasm. It catalyses the reaction a fatty acyl-[ACP] + phosphate = an acyl phosphate + holo-[ACP]. It participates in lipid metabolism; phospholipid metabolism. Catalyzes the reversible formation of acyl-phosphate (acyl-PO(4)) from acyl-[acyl-carrier-protein] (acyl-ACP). This enzyme utilizes acyl-ACP as fatty acyl donor, but not acyl-CoA. The chain is Phosphate acyltransferase from Pseudothermotoga lettingae (strain ATCC BAA-301 / DSM 14385 / NBRC 107922 / TMO) (Thermotoga lettingae).